Here is a 512-residue protein sequence, read N- to C-terminus: Maturase K (512 aa).

This sequence belongs to the intron maturase 2 family. MatK subfamily.

The protein resides in the plastid. It localises to the chloroplast. Usually encoded in the trnK tRNA gene intron. Probably assists in splicing its own and other chloroplast group II introns. This Lilium tsingtauense (Twilight lily) protein is Maturase K.